Consider the following 425-residue polypeptide: 1,4-beta-D-glucan glucohydrolase (425 aa).

The active-site Proton donor is Glu164. Catalysis depends on Glu349, which acts as the Nucleophile.

It belongs to the glycosyl hydrolase 1 family. In terms of assembly, monomer.

The catalysed reaction is Hydrolysis of (1-&gt;4)-linkages in (1-&gt;4)-beta-D-glucans, to remove successive glucose units.. The enzyme catalyses Hydrolysis of terminal, non-reducing beta-D-glucosyl residues with release of beta-D-glucose.. It functions in the pathway glycan metabolism; cellulose degradation. The protein operates within glycan metabolism; beta-D-glucan degradation. Broad substrate specificity glycosidase. Releases glucose from soluble glucooligomers, with a preference for longer oligomers; acts more readily on cellotetraose than on cellobiose. Displays similar activities towards the disaccharides lactose and cellobiose. Is also able to hydrolyze various aryl-beta-glycosides in vitro. The sequence is that of 1,4-beta-D-glucan glucohydrolase (bglA) from Thermotoga neapolitana.